Reading from the N-terminus, the 193-residue chain is Small ribosomal subunit protein eS1 (193 aa).

It belongs to the eukaryotic ribosomal protein eS1 family.

The protein is Small ribosomal subunit protein eS1 of Sulfurisphaera tokodaii (strain DSM 16993 / JCM 10545 / NBRC 100140 / 7) (Sulfolobus tokodaii).